The primary structure comprises 312 residues: Small ribosomal subunit protein uS2m (312 aa).

Belongs to the universal ribosomal protein uS2 family.

It localises to the mitochondrion. The chain is Small ribosomal subunit protein uS2m (RPS2) from Acanthamoeba castellanii (Amoeba).